A 220-amino-acid polypeptide reads, in one-letter code: Lipoprotein-releasing system ATP-binding protein LolD (220 aa).

Residues methionine 1–serine 220 form the ABC transporter domain. ATP is bound at residue glycine 37 to serine 44.

It belongs to the ABC transporter superfamily. Lipoprotein translocase (TC 3.A.1.125) family. The complex is composed of two ATP-binding proteins (LolD) and two transmembrane proteins (LolC and LolE).

The protein localises to the cell inner membrane. Part of the ABC transporter complex LolCDE involved in the translocation of mature outer membrane-directed lipoproteins, from the inner membrane to the periplasmic chaperone, LolA. Responsible for the formation of the LolA-lipoprotein complex in an ATP-dependent manner. The protein is Lipoprotein-releasing system ATP-binding protein LolD of Bdellovibrio bacteriovorus (strain ATCC 15356 / DSM 50701 / NCIMB 9529 / HD100).